A 600-amino-acid chain; its full sequence is Arginine--tRNA ligase (600 aa).

The 'HIGH' region motif lies at Ala132 to His142.

It belongs to the class-I aminoacyl-tRNA synthetase family. Monomer.

The protein localises to the cytoplasm. The catalysed reaction is tRNA(Arg) + L-arginine + ATP = L-arginyl-tRNA(Arg) + AMP + diphosphate. This Ralstonia nicotianae (strain ATCC BAA-1114 / GMI1000) (Ralstonia solanacearum) protein is Arginine--tRNA ligase.